The chain runs to 396 residues: 1-deoxy-D-xylulose 5-phosphate reductoisomerase (396 aa).

NADPH-binding residues include Thr-10, Gly-11, Ser-12, Ile-13, and Asn-123. Lys-124 contributes to the 1-deoxy-D-xylulose 5-phosphate binding site. Glu-125 lines the NADPH pocket. Asp-149 lines the Mn(2+) pocket. The 1-deoxy-D-xylulose 5-phosphate site is built by Ser-150, Glu-151, Ser-185, and His-208. Residue Glu-151 participates in Mn(2+) binding. NADPH is bound at residue Gly-214. Positions 221, 226, 227, and 230 each coordinate 1-deoxy-D-xylulose 5-phosphate. Glu-230 serves as a coordination point for Mn(2+).

It belongs to the DXR family. Requires Mg(2+) as cofactor. It depends on Mn(2+) as a cofactor.

The enzyme catalyses 2-C-methyl-D-erythritol 4-phosphate + NADP(+) = 1-deoxy-D-xylulose 5-phosphate + NADPH + H(+). It participates in isoprenoid biosynthesis; isopentenyl diphosphate biosynthesis via DXP pathway; isopentenyl diphosphate from 1-deoxy-D-xylulose 5-phosphate: step 1/6. In terms of biological role, catalyzes the NADPH-dependent rearrangement and reduction of 1-deoxy-D-xylulose-5-phosphate (DXP) to 2-C-methyl-D-erythritol 4-phosphate (MEP). This Shewanella sp. (strain MR-7) protein is 1-deoxy-D-xylulose 5-phosphate reductoisomerase.